The chain runs to 460 residues: Hydroxymethylglutaryl-CoA synthase MYCGRDRAFT_54740 (460 aa).

Residue alanine 35 participates in (3S)-3-hydroxy-3-methylglutaryl-CoA binding. Glutamate 86 acts as the Proton donor/acceptor in catalysis. Cysteine 120, asparagine 158, threonine 162, serine 212, histidine 262, lysine 271, asparagine 339, and serine 373 together coordinate (3S)-3-hydroxy-3-methylglutaryl-CoA. The active-site Acyl-thioester intermediate is the cysteine 120. Residue histidine 262 is the Proton donor/acceptor of the active site.

This sequence belongs to the thiolase-like superfamily. HMG-CoA synthase family.

The catalysed reaction is acetoacetyl-CoA + acetyl-CoA + H2O = (3S)-3-hydroxy-3-methylglutaryl-CoA + CoA + H(+). The protein operates within siderophore biosynthesis. In terms of biological role, hydroxymethylglutaryl-CoA synthase involved in the biosynthesis of a ferrichrome A-like siderophors which may contribute to organismal virulence. The first step of siderophore biosynthesis is performed by the HMG-CoA synthase (HMGS) MYCGRDRAFT_54740 which catalyzes the generation of HMG-CoA and CoA using acetoacetyl-CoA and acetyl-CoA as substrates. The enoyl-CoA isomerase/hydratase MYCGRDRAFT_76805 then catalyzes the conversion of HMG-CoA to methylglutaconyl-CoA. The acyltransferase MYCGRDRAFT_85486 then fuses methylglutaconyl-CoA with hydroxyornithine to yield methylglutaconyl hydroxyornithine. Methylglutaconyl hydroxyornithine is then available for use by the nonribosomal peptide synthetase NRPS2 to generate the ferrichrome A-like siderophore. This is Hydroxymethylglutaryl-CoA synthase MYCGRDRAFT_54740 (ERG13) from Zymoseptoria tritici (strain CBS 115943 / IPO323) (Speckled leaf blotch fungus).